The following is a 346-amino-acid chain: Short-chain dehydrogenase/reductase bet4 (346 aa).

The interval 1–35 is disordered; it reads MTPAKAPSHAKKPEAGSQPISSMWTQMFPPKPTYT. NADP(+) is bound by residues Val-56, Lys-80, Asp-105, and Asn-132. Ser-191 serves as the catalytic Proton donor. Residues Tyr-222 and Lys-226 each coordinate NADP(+). The active-site Proton acceptor is the Tyr-222. Lys-226 (lowers pKa of active site Tyr) is an active-site residue.

The protein belongs to the short-chain dehydrogenases/reductases (SDR) family.

It carries out the reaction dehydroprobetaenone I + AH2 = probetaenone I + A. The protein operates within mycotoxin biosynthesis. In terms of biological role, short-chain dehydrogenase/reductase; part of the gene cluster that mediates the biosynthesis of betaenones, phytotoxic polyketides involved in leaf spot disease in sugar beets. The first step of the pathway is the synthesis of dehydroprobetaenone I by the polyketide synthase bet1 and the enoyl reductase bet3 via condensation of one acetyl-CoA starter unit with 7 malonyl-CoA units and 5 methylations. The C-terminal reductase (R) domain of bet1 catalyzes the reductive release of the polyketide chain. Because bet1 lacks a designated enoylreductase (ER) domain, the required activity is provided the enoyl reductase bet3. The short-chain dehydrogenase/reductase bet4 then catalyzes reduction of dehydroprobetaenone I to probetaenone I. The cytochrome P450 monooxygenase bet2 catalyzes successive epoxidation, oxidation (resulting from epoxide opening) and hydroxylation to install a tertiary alcohol in the decaline ring to yield betaenone C from dehydroprobetaenone I and betaenone B from probetaenone I. The FAD-linked oxidoreductase (orf1) is probably responsible for the conversion of betaenone C to betaenone A via an intramolecular aldol reaction between C-1 and C-17 to form the bridged tricyclic system in betaenone A. This chain is Short-chain dehydrogenase/reductase bet4, found in Neocamarosporium betae (Beet black rot fungus).